We begin with the raw amino-acid sequence, 744 residues long: Prestin (744 aa).

Residues 1–75 lie on the Cytoplasmic side of the membrane; sequence MDHAEENEIP…PITKWLPAYK (75 aa). Residues 76 to 105 form a helical membrane-spanning segment; that stretch reads FKEYVLGDLVSGISTGVLQLPQGLAFAMLA. Topologically, residues 106–108 are extracellular; it reads AVP. Residues 109-126 form a helical membrane-spanning segment; the sequence is PVFGLYSSFYPVIMYCFF. Residues 127 to 137 are Cytoplasmic-facing; that stretch reads GTSRHISIGPF. A helical membrane pass occupies residues 138-151; the sequence is AVISLMIGGVAVRL. At 152-168 the chain is on the extracellular side; that stretch reads VPDDIVIPGGVNATNGT. The Involved in motor function motif lies at 158–168; it reads IPGGVNATNGT. Residues Asn163 and Asn166 are each glycosylated (N-linked (GlcNAc...) asparagine). The helical transmembrane segment at 169–196 threads the bilayer; that stretch reads EARDALRVKVAMSVTLLSGIIQFCLGVC. Topologically, residues 197 to 206 are cytoplasmic; the sequence is RFGFVAIYLT. Residues 207–230 form a helical membrane-spanning segment; the sequence is EPLVRGFTTAAAVHVFTSMLKYLF. Residues 231–241 lie on the Extracellular side of the membrane; it reads GVKTKRYSGIF. The helical intramembrane region spans 242–253; the sequence is SVVYSTVAVLQN. Topologically, residues 254-258 are extracellular; sequence VKNLN. A helical transmembrane segment spans residues 259–282; it reads VCSLGVGLMVFGLLLGGKEFNERF. At 283 to 291 the chain is on the cytoplasmic side; the sequence is KEKLPAPIP. Residues 292–307 traverse the membrane as a helical segment; it reads LEFFAVVMGTGISAGF. The Extracellular segment spans residues 308–332; sequence NLHESYSVDVVGTLPLGLLPPANPD. A helical transmembrane segment spans residues 333–367; the sequence is TSLFHLVYVDAIAIAIVGFSVTISMAKTLANKHGY. Over 368 to 370 the chain is Cytoplasmic; the sequence is QVD. A helical transmembrane segment spans residues 371–388; sequence GNQELIALGICNSIGSLF. Residues 389–396 lie on the Extracellular side of the membrane; that stretch reads QTFSISCS. A helical transmembrane segment spans residues 397 to 406; sequence LSRSLVQEGT. Residue Ser398 coordinates salicylate. Residues 407-410 are Cytoplasmic-facing; that stretch reads GGKT. Residues 411-432 form a helical membrane-spanning segment; the sequence is QLAGCLASLMILLVILATGFLF. Residues 433 to 436 are Extracellular-facing; sequence ESLP. A helical transmembrane segment spans residues 437 to 464; the sequence is QAVLSAIVIVNLKGMFMQFSDLPFFWRT. Ser465 is a topological domain (cytoplasmic). The chain crosses the membrane as a helical span at residues 466–481; the sequence is KIELTIWLTTFVSSLF. The Extracellular portion of the chain corresponds to 482 to 483; sequence LG. A helical membrane pass occupies residues 484 to 504; it reads LDYGLITAVIIALLTVIYRTQ. Positions 505–718 are extended region for STAS domain; sequence SPSYKVLGQL…AVLGSQVREA (214 aa). Over 505 to 744 the chain is Cytoplasmic; that stretch reads SPSYKVLGQL…PNATPTTPEA (240 aa). In terms of domain architecture, STAS spans 525–713; sequence AYEEVKEIPG…HSIHDAVLGS (189 aa). The interval 720–744 is disordered; it reads AEQEATASLPQEDMEPNATPTTPEA.

It belongs to the SLC26A/SulP transporter (TC 2.A.53) family. As to quaternary structure, homodimer. Interacts (via STAS domain) with CALM; this interaction is calcium-dependent and the STAS domain interacts with only one lobe of CALM which is an elongated conformation. Interacts with MYH1. Expressed in the outer hair cells (OHC) of the organ of Corti of the inner ear. Also weak expression in brain and testis. Very weakly expressed in heart, spleen, muscle and lactating mammary glands. Expressed in cardiac myocytes (at protein level), both in the surface sarcolemma and along the t-tubule. Weakly expressed in skeletal muscle cells (at protein level).

Its subcellular location is the lateral cell membrane. The catalysed reaction is 2 hydrogencarbonate(in) + chloride(out) = 2 hydrogencarbonate(out) + chloride(in). Its function is as follows. Voltage-sensitive motor protein that drives outer hair cell (OHC) electromotility (eM) and participates in sound amplification in the hearing organ. Converts changes in the transmembrane electric potential into mechanical displacements resulting in the coupling of its expansion to movement of a charged voltage sensor across the lipid membrane. The nature of the voltage sensor is not completely clear, and two models compete. In the first model, acts as an incomplete transporter where intracellular chloride anion acts as extrinsic voltage sensor that drives conformational change in the protein which is sufficient to produce a length change in the plane of the membrane and hence in the length of the OHC. The second model in which multiple charged amino acid residues are distributed at the intracellular and extracellular membrane interfaces that form an intrinsic voltage sensor, whose movement produces the non-linear capacitance (NLC). However, the effective voltage sensor may be the result of a hybrid voltage sensor, assembled from intrinsic charge (charged residues) and extrinsic charge (bound anion). Notably, binding of anions to the anion-binding pocket partially neutralizes the intrinsic positive charge rather than to form an electrically negative sensor, therefore remaining charge may serve as voltage sensor that, after depolarization, moves from down (expanded state) to up (contracted) conformation, which is accompanied by an eccentric contraction of the intermembrane cross-sectional area of the protein as well as a major increase in the hydrophobic thickness of the protein having as consequences the plasma membrane thickening and the cell contraction after membrane depolarization. The anion-binding pocket transits from the inward-open (Down) state, where it is exposed toward the intracellular solvent in the absence of anion, to the occluded (Up) state upon anion binding. Salicylate competes for the anion-binding site and inhibits the voltage-sensor movement, and therefore inhibits the charge transfer and electromotility by displacing Cl(-) from the anion-binding site and by preventing the structural transitions to the contracted state. In addition, can act as a weak Cl(-)/HCO3(-) antiporter across the cell membrane and so regulate the intracellular pH of the outer hair cells (OHCs), while firstly found as being unable to mediate electrogenic anion transport. Moreover, supports a role in cardiac mechanical amplification serving as an elastic element to enhance the actomyosin- based sarcomere contraction system. The protein is Prestin of Mus musculus (Mouse).